The following is a 27-amino-acid chain: Conotoxin (27 aa).

3 disulfides stabilise this stretch: Cys-2–Cys-16, Cys-6–Cys-18, and Cys-12–Cys-23. Asparagine amide is present on Asn-27.

In terms of tissue distribution, expressed by the venom duct.

It localises to the secreted. In terms of biological role, probable neurotoxin that inhibits ion channels. In Conus amadis (Amadis cone), this protein is Conotoxin.